A 482-amino-acid polypeptide reads, in one-letter code: tRNA sulfurtransferase (482 aa).

The THUMP domain maps to 61–165 (LAIRDALTRI…DDRLLLIKGR (105 aa)). ATP-binding positions include 183 to 184 (LI), lysine 265, glycine 287, and glutamine 296. Cysteines 344 and 456 form a disulfide. Residues 404–482 (FGPNDVILDI…GFNNVKVYRP (79 aa)) form the Rhodanese domain. Cysteine 456 functions as the Cysteine persulfide intermediate in the catalytic mechanism.

The protein belongs to the ThiI family.

The protein resides in the cytoplasm. It carries out the reaction [ThiI sulfur-carrier protein]-S-sulfanyl-L-cysteine + a uridine in tRNA + 2 reduced [2Fe-2S]-[ferredoxin] + ATP + H(+) = [ThiI sulfur-carrier protein]-L-cysteine + a 4-thiouridine in tRNA + 2 oxidized [2Fe-2S]-[ferredoxin] + AMP + diphosphate. The catalysed reaction is [ThiS sulfur-carrier protein]-C-terminal Gly-Gly-AMP + S-sulfanyl-L-cysteinyl-[cysteine desulfurase] + AH2 = [ThiS sulfur-carrier protein]-C-terminal-Gly-aminoethanethioate + L-cysteinyl-[cysteine desulfurase] + A + AMP + 2 H(+). Its pathway is cofactor biosynthesis; thiamine diphosphate biosynthesis. In terms of biological role, catalyzes the ATP-dependent transfer of a sulfur to tRNA to produce 4-thiouridine in position 8 of tRNAs, which functions as a near-UV photosensor. Also catalyzes the transfer of sulfur to the sulfur carrier protein ThiS, forming ThiS-thiocarboxylate. This is a step in the synthesis of thiazole, in the thiamine biosynthesis pathway. The sulfur is donated as persulfide by IscS. The sequence is that of tRNA sulfurtransferase from Escherichia coli (strain K12 / MC4100 / BW2952).